A 454-amino-acid polypeptide reads, in one-letter code: tRNA modification GTPase MnmE (454 aa).

(6S)-5-formyl-5,6,7,8-tetrahydrofolate-binding residues include R23, E80, and K120. The TrmE-type G domain occupies 216–377 (GMKVVIAGRP…LRNHLKQSMG (162 aa)). N226 contacts K(+). GTP is bound by residues 226-231 (NAGKSS), 245-251 (TDIAGTT), 270-273 (DTAG), 335-338 (NKAD), and 358-360 (SAR). Position 230 (S230) interacts with Mg(2+). T245, I247, and T250 together coordinate K(+). T251 contributes to the Mg(2+) binding site. K454 is a (6S)-5-formyl-5,6,7,8-tetrahydrofolate binding site.

This sequence belongs to the TRAFAC class TrmE-Era-EngA-EngB-Septin-like GTPase superfamily. TrmE GTPase family. In terms of assembly, homodimer. Heterotetramer of two MnmE and two MnmG subunits. The cofactor is K(+).

It localises to the cytoplasm. Exhibits a very high intrinsic GTPase hydrolysis rate. Involved in the addition of a carboxymethylaminomethyl (cmnm) group at the wobble position (U34) of certain tRNAs, forming tRNA-cmnm(5)s(2)U34. The chain is tRNA modification GTPase MnmE from Shigella boydii serotype 18 (strain CDC 3083-94 / BS512).